The primary structure comprises 236 residues: 15,16-dihydrobiliverdin:ferredoxin oxidoreductase (236 aa).

The protein belongs to the HY2 family.

It catalyses the reaction 15,16-dihydrobiliverdin + oxidized 2[4Fe-4S]-[ferredoxin] = biliverdin IXalpha + reduced 2[4Fe-4S]-[ferredoxin] + 2 H(+). Functionally, catalyzes the two-electron reduction of biliverdin IX-alpha at the C15 methine bridge. This is 15,16-dihydrobiliverdin:ferredoxin oxidoreductase from Prochlorococcus marinus (strain MIT 9312).